Consider the following 137-residue polypeptide: ATP synthase epsilon chain, chloroplastic (137 aa).

Belongs to the ATPase epsilon chain family. As to quaternary structure, F-type ATPases have 2 components, CF(1) - the catalytic core - and CF(0) - the membrane proton channel. CF(1) has five subunits: alpha(3), beta(3), gamma(1), delta(1), epsilon(1). CF(0) has three main subunits: a, b and c.

It is found in the plastid. The protein resides in the chloroplast thylakoid membrane. In terms of biological role, produces ATP from ADP in the presence of a proton gradient across the membrane. In Hordeum vulgare (Barley), this protein is ATP synthase epsilon chain, chloroplastic.